We begin with the raw amino-acid sequence, 506 residues long: Anaerobic nitric oxide reductase transcription regulator NorR (506 aa).

Asp-57 bears the 4-aspartylphosphate mark. Residues 187-416 form the Sigma-54 factor interaction domain; sequence MIGLSPAMTQ…LEHAIHRAVV (230 aa). Residues 215–222 and 278–287 each bind ATP; these read GETGTGKE and ADNGTLFLDE. Positions 481 to 500 form a DNA-binding region, H-T-H motif; the sequence is WAASARALETDVANLHRLAK.

It functions in the pathway nitrogen metabolism; nitric oxide reduction. Required for the expression of anaerobic nitric oxide (NO) reductase, acts as a transcriptional activator for at least the norVW operon. Activation also requires sigma-54. This is Anaerobic nitric oxide reductase transcription regulator NorR from Salmonella newport (strain SL254).